A 599-amino-acid polypeptide reads, in one-letter code: Laccase-2 (599 aa).

The first 19 residues, 1 to 19 (MARSTTSLFALSLVASAFA), serve as a signal peptide directing secretion. 2 consecutive Plastocyanin-like domains span residues 21-145 (VVDY…IVIY) and 157-307 (VDDE…LVYE). Positions 82, 84, 127, and 129 each coordinate Cu cation. Cys-103 and Cys-588 form a disulfide bridge. Asn-207, Asn-208, Asn-231, Asn-397, and Asn-443 each carry an N-linked (GlcNAc...) asparagine glycan. One can recognise a Plastocyanin-like 3 domain in the interval 450–567 (DVPTLLKILT…EGFAMVFAEA (118 aa)). 7 residues coordinate Cu cation: His-497, His-500, His-502, His-549, Cys-550, His-551, and His-555.

Belongs to the multicopper oxidase family. Homodimer. Cu cation is required as a cofactor. As to expression, in mycelia, at a lower level than LCC4.

Its subcellular location is the secreted. The enzyme catalyses 4 hydroquinone + O2 = 4 benzosemiquinone + 2 H2O. In terms of biological role, lignin degradation and detoxification of lignin-derived products. The chain is Laccase-2 (LCC2) from Thanatephorus cucumeris (Black scurf of potato).